A 422-amino-acid chain; its full sequence is CinA-like protein (422 aa).

Belongs to the CinA family.

The sequence is that of CinA-like protein from Mycolicibacterium gilvum (strain PYR-GCK) (Mycobacterium gilvum (strain PYR-GCK)).